The following is a 445-amino-acid chain: Methionine aminopeptidase 2 (445 aa).

The segment at 1-76 (MAAQVASGVG…KKKCTSKVQT (76 aa)) is disordered. A compositionally biased stretch (basic residues) spans 57-71 (AKKKKKKTKKKKKCT). His-195 provides a ligand contact to substrate. The a divalent metal cation site is built by Asp-215, Asp-226, and His-295. His-303 is a substrate binding site. A divalent metal cation is bound by residues Glu-331 and Glu-426.

It belongs to the peptidase M24A family. Methionine aminopeptidase eukaryotic type 2 subfamily. The cofactor is Co(2+). Requires Zn(2+) as cofactor. Mn(2+) serves as cofactor. It depends on Fe(2+) as a cofactor.

Its subcellular location is the cytoplasm. It catalyses the reaction Release of N-terminal amino acids, preferentially methionine, from peptides and arylamides.. Cotranslationally removes the N-terminal methionine from nascent proteins. The N-terminal methionine is often cleaved when the second residue in the primary sequence is small and uncharged (Met-Ala-, Cys, Gly, Pro, Ser, Thr, or Val). The sequence is that of Methionine aminopeptidase 2 from Paracoccidioides lutzii (strain ATCC MYA-826 / Pb01) (Paracoccidioides brasiliensis).